Consider the following 58-residue polypeptide: Small ribosomal subunit protein bS21 (58 aa).

This sequence belongs to the bacterial ribosomal protein bS21 family.

The sequence is that of Small ribosomal subunit protein bS21 from Streptococcus pyogenes serotype M49 (strain NZ131).